Reading from the N-terminus, the 526-residue chain is Opine oxidase subunit A (526 aa).

Positions 396, 398, 431, and 436 each coordinate [2Fe-2S] cluster.

The protein to T-protein and to dimethylglycine dehydrogenase. Heterodimer of a subunit A and a subunit B. [2Fe-2S] cluster is required as a cofactor.

It participates in opine metabolism; octopine degradation. Its function is as follows. Oxidative cleavage of octopine into L-arginine and pyruvate. The protein is Opine oxidase subunit A (ooxA) of Rhizobium meliloti (Ensifer meliloti).